A 90-amino-acid polypeptide reads, in one-letter code: Bombyxin B-3 (90 aa).

A signal peptide spans 1–20 (MMKTTIMFMLVVVISLTYSS). 3 disulfides stabilise this stretch: cysteine 30–cysteine 76, cysteine 42–cysteine 89, and cysteine 75–cysteine 80. Residues 49–67 (SGAQYAPYFWTRQYLGSRG) constitute a propeptide, c peptide like.

This sequence belongs to the insulin family. Heterodimer of a B chain and an A chain linked by two disulfide bonds.

The protein localises to the secreted. Brain peptide responsible for activation of prothoracic glands to produce ecdysone in insects. This chain is Bombyxin B-3 (BBXB3), found in Bombyx mori (Silk moth).